The following is a 266-amino-acid chain: Small ribosomal subunit protein uS3 (266 aa).

One can recognise a KH type-2 domain in the interval 39–107 (VREYLKKKLK…PVHVNIEEIR (69 aa)). Residues 214–266 (PVVEEVTEDKRPRRNARPGDRRPRRDGEGGAPGARRGGPRRGAGKPEDGKTGE) are disordered. Basic and acidic residues-rich tracts occupy residues 230–241 (RPGDRRPRRDGE) and 257–266 (GKPEDGKTGE).

This sequence belongs to the universal ribosomal protein uS3 family. Part of the 30S ribosomal subunit. Forms a tight complex with proteins S10 and S14.

Functionally, binds the lower part of the 30S subunit head. Binds mRNA in the 70S ribosome, positioning it for translation. The sequence is that of Small ribosomal subunit protein uS3 from Burkholderia thailandensis (strain ATCC 700388 / DSM 13276 / CCUG 48851 / CIP 106301 / E264).